Consider the following 423-residue polypeptide: Serine--tRNA ligase (423 aa).

Position 229–231 (229–231 (TAE)) interacts with L-serine. 260-262 (RKE) is a binding site for ATP. E283 contacts L-serine. An ATP-binding site is contributed by 347-350 (EVSS). Residue S383 coordinates L-serine.

Belongs to the class-II aminoacyl-tRNA synthetase family. Type-1 seryl-tRNA synthetase subfamily. As to quaternary structure, homodimer. The tRNA molecule binds across the dimer.

The protein resides in the cytoplasm. It carries out the reaction tRNA(Ser) + L-serine + ATP = L-seryl-tRNA(Ser) + AMP + diphosphate + H(+). It catalyses the reaction tRNA(Sec) + L-serine + ATP = L-seryl-tRNA(Sec) + AMP + diphosphate + H(+). It functions in the pathway aminoacyl-tRNA biosynthesis; selenocysteinyl-tRNA(Sec) biosynthesis; L-seryl-tRNA(Sec) from L-serine and tRNA(Sec): step 1/1. Catalyzes the attachment of serine to tRNA(Ser). Is also able to aminoacylate tRNA(Sec) with serine, to form the misacylated tRNA L-seryl-tRNA(Sec), which will be further converted into selenocysteinyl-tRNA(Sec). The polypeptide is Serine--tRNA ligase (Chloroflexus aurantiacus (strain ATCC 29366 / DSM 635 / J-10-fl)).